Reading from the N-terminus, the 322-residue chain is Probable L-asparaginase (322 aa).

The Asparaginase/glutaminase domain occupies 6–320 (PRLALIHTGG…EDIRRVFTQG (315 aa)). A disordered region spans residues 13 to 37 (TGGTIASRPSPDGRGLTPQTPPALP). T16 serves as the catalytic O-isoaspartyl threonine intermediate. Residues S54 and 85–86 (TD) contribute to the substrate site.

It belongs to the asparaginase 1 family.

Its subcellular location is the cytoplasm. The catalysed reaction is L-asparagine + H2O = L-aspartate + NH4(+). This Deinococcus radiodurans (strain ATCC 13939 / DSM 20539 / JCM 16871 / CCUG 27074 / LMG 4051 / NBRC 15346 / NCIMB 9279 / VKM B-1422 / R1) protein is Probable L-asparaginase (ansA).